A 51-amino-acid chain; its full sequence is uncharacterized protein (51 aa).

This is an uncharacterized protein from Escherichia coli (strain K12).